The primary structure comprises 95 residues: PIK3R3 upstream open reading frame protein (95 aa).

Residues 1–27 (MGPSRLVRGPRPQGMRSPYRRPGMGWP) form a disordered region.

The protein is PIK3R3 upstream open reading frame protein of Homo sapiens (Human).